The primary structure comprises 347 residues: MNPVVLTMILLTIMLGTVIVMTTSHWLLVWIGFEMNMLAIIPILMKKYNPRSMEASTKYFLTQATASMLLMLAIVINLIHSGQWSTTNPLDPTTSIIMTLALAMKLGLAPFHFWVPEVTQGIQLSSGLILLTWQKLAPMSILYQISPTINLHLLLLMSLTSILIGGWGGLNQTQLRKIMAYSSIAHMGWMTTIMIYNPTMALLNLTIYIILTTTTFMTFMMSSSTTTLSLSHLWNKMPLLTSAVLMTMLSLGGLPPLSGFSPKWMIIQELTKNNSIIMPTIMAITALLNLFFYMRLAYSTSLTMFPSTNNMKIKWQFNNSKSMNLLSPMIILSTLILPLSPMLALLE.

11 helical membrane-spanning segments follow: residues 3-23, 25-45, 59-79, 96-116, 122-142, 149-169, 178-198, 200-220, 237-257, 274-294, and 325-345; these read PVVLTMILLTIMLGTVIVMTT, HWLLVWIGFEMNMLAIIPILM, YFLTQATASMLLMLAIVINLI, IIMTLALAMKLGLAPFHFWVP, IQLSSGLILLTWQKLAPMSIL, INLHLLLLMSLTSILIGGWGG, IMAYSSIAHMGWMTTIMIYNP, MALLNLTIYIILTTTTFMTFM, MPLLTSAVLMTMLSLGGLPPL, NSIIMPTIMAITALLNLFFYM, and LLSPMIILSTLILPLSPMLAL.

It belongs to the complex I subunit 2 family. Core subunit of respiratory chain NADH dehydrogenase (Complex I) which is composed of 45 different subunits. Interacts with TMEM242.

It is found in the mitochondrion inner membrane. The catalysed reaction is a ubiquinone + NADH + 5 H(+)(in) = a ubiquinol + NAD(+) + 4 H(+)(out). Functionally, core subunit of the mitochondrial membrane respiratory chain NADH dehydrogenase (Complex I) which catalyzes electron transfer from NADH through the respiratory chain, using ubiquinone as an electron acceptor. Essential for the catalytic activity and assembly of complex I. This chain is NADH-ubiquinone oxidoreductase chain 2, found in Paranyctimene raptor (Unstriped tube-nosed fruit bat).